A 1011-amino-acid polypeptide reads, in one-letter code: Vacuolar membrane protease (1011 aa).

At 1–9 (MSNPFAFRS) the chain is on the cytoplasmic side. The helical transmembrane segment at 10 to 30 (AQVTFWTTVVYLALLVPLVVI) threads the bilayer. Residues 31 to 378 (NEGVPPVQPD…TFVLFGLRGM (348 aa)) lie on the Vacuolar side of the membrane. N-linked (GlcNAc...) asparagine glycans are attached at residues asparagine 50 and asparagine 106. 2 residues coordinate Zn(2+): histidine 159 and aspartate 171. The active-site Proton acceptor is glutamate 205. The Zn(2+) site is built by glutamate 206, glutamate 231, and histidine 304. A glycan (N-linked (GlcNAc...) asparagine) is linked at asparagine 331. The helical transmembrane segment at 379 to 399 (FAWSLTVLIVGPLTLFGMMYL) threads the bilayer. Over 400 to 439 (VHKQGKGYAFHTKLRATSDSSSEDGDDEDGEVIRLGGWKG) the chain is Cytoplasmic. The helical transmembrane segment at 440 to 460 (FFRFPFALIVAGALVTGAALL) threads the bilayer. The Vacuolar segment spans residues 461 to 471 (LRKMNPFIIYS). Residues 472-492 (SEYAVWAMMISLFYFGFWLIM) form a helical membrane-spanning segment. The Cytoplasmic segment spans residues 493-505 (RGSSYTRPSALHR). The chain crosses the membrane as a helical span at residues 506–526 (LYVHIWLFILGWVALVFATVL). Residues 527-536 (EDRMRIASGY) are Vacuolar-facing. A helical transmembrane segment spans residues 537–557 (IFVFWESQVFLATLVAVCELF). Residues 558–682 (SLPRKIDFAR…WSGPMVTSTW (125 aa)) lie on the Cytoplasmic side of the membrane. Polar residues predominate over residues 595 to 609 (EATSPQRAGQSSNSP). Disordered regions lie at residues 595-627 (EATS…LFRK) and 650-671 (IMDS…EGEQ). Over residues 610–622 (QEDDEDDVPDEET) the composition is skewed to acidic residues. A helical transmembrane segment spans residues 683–703 (ILQFLLLGPFMVILGGQVGLL). At 704 to 719 (LTSAVNQTGVDGSSLL) the chain is on the vacuolar side. N-linked (GlcNAc...) asparagine glycosylation occurs at asparagine 709. A helical transmembrane segment spans residues 720-740 (APYLMIAALSAILLMPLSPFI). Residues 741 to 747 (HRVTKHV) lie on the Cytoplasmic side of the membrane. Residues 748–768 (PLFLLAVAFATLIYSLVAFPF) form a helical membrane-spanning segment. Residues 769-1011 (SPRAPYKTFF…LVEGSKAFKV (243 aa)) are Vacuolar-facing. Residue asparagine 872 is glycosylated (N-linked (GlcNAc...) asparagine).

This sequence belongs to the peptidase M28 family. Zn(2+) is required as a cofactor.

It is found in the vacuole membrane. In terms of biological role, may be involved in vacuolar sorting and osmoregulation. The polypeptide is Vacuolar membrane protease (Pyricularia oryzae (strain 70-15 / ATCC MYA-4617 / FGSC 8958) (Rice blast fungus)).